The sequence spans 221 residues: UPF0502 protein PLES_16071 (221 aa).

The protein belongs to the UPF0502 family.

This Pseudomonas aeruginosa (strain LESB58) protein is UPF0502 protein PLES_16071.